Consider the following 55-residue polypeptide: Photosystem II reaction center X protein (55 aa).

A helical transmembrane segment spans residues 24-44; sequence IGSFLAAAALIVVPAASFLLW.

Belongs to the PsbX family. Type 2 subfamily. PSII consists of a core antenna complex that captures photons, and an electron transfer chain that converts photonic excitation into a charge separation. PSII forms dimeric complexes.

It is found in the cellular thylakoid membrane. Functionally, involved in the binding and/or turnover of quinones at the Q(B) site of Photosystem II. The protein is Photosystem II reaction center X protein of Prochlorococcus marinus (strain SARG / CCMP1375 / SS120).